Here is a 190-residue protein sequence, read N- to C-terminus: Elongation factor P (190 aa).

At Lys34 the chain carries N6-(3,6-diaminohexanoyl)-5-hydroxylysine.

The protein belongs to the elongation factor P family. May be beta-lysylated on the epsilon-amino group of Lys-34 by the combined action of EpmA and EpmB, and then hydroxylated on the C5 position of the same residue by EpmC (if this protein is present). Lysylation is critical for the stimulatory effect of EF-P on peptide-bond formation. The lysylation moiety may extend toward the peptidyltransferase center and stabilize the terminal 3-CCA end of the tRNA. Hydroxylation of the C5 position on Lys-34 may allow additional potential stabilizing hydrogen-bond interactions with the P-tRNA.

The protein localises to the cytoplasm. Its pathway is protein biosynthesis; polypeptide chain elongation. Its function is as follows. Involved in peptide bond synthesis. Alleviates ribosome stalling that occurs when 3 or more consecutive Pro residues or the sequence PPG is present in a protein, possibly by augmenting the peptidyl transferase activity of the ribosome. Modification of Lys-34 is required for alleviation. The protein is Elongation factor P of Hahella chejuensis (strain KCTC 2396).